The following is a 172-amino-acid chain: Exocyst complex component 1-like (172 aa).

The polypeptide is Exocyst complex component 1-like (Mus musculus (Mouse)).